The primary structure comprises 434 residues: Serine hydroxymethyltransferase (434 aa).

Residues Leu133 and 137–139 (GHL) each bind (6S)-5,6,7,8-tetrahydrofolate. Lys242 carries the N6-(pyridoxal phosphate)lysine modification.

This sequence belongs to the SHMT family. As to quaternary structure, homodimer. The cofactor is pyridoxal 5'-phosphate.

It is found in the cytoplasm. It catalyses the reaction (6R)-5,10-methylene-5,6,7,8-tetrahydrofolate + glycine + H2O = (6S)-5,6,7,8-tetrahydrofolate + L-serine. Its pathway is one-carbon metabolism; tetrahydrofolate interconversion. It participates in amino-acid biosynthesis; glycine biosynthesis; glycine from L-serine: step 1/1. Catalyzes the reversible interconversion of serine and glycine with tetrahydrofolate (THF) serving as the one-carbon carrier. This reaction serves as the major source of one-carbon groups required for the biosynthesis of purines, thymidylate, methionine, and other important biomolecules. Also exhibits THF-independent aldolase activity toward beta-hydroxyamino acids, producing glycine and aldehydes, via a retro-aldol mechanism. The sequence is that of Serine hydroxymethyltransferase from Methylorubrum extorquens (strain CM4 / NCIMB 13688) (Methylobacterium extorquens).